The chain runs to 360 residues: Peptide chain release factor 1 (360 aa).

The residue at position 235 (Q235) is an N5-methylglutamine. The disordered stretch occupies residues 285–305 (KRQEAEASERRNLLGSGDRSD).

The protein belongs to the prokaryotic/mitochondrial release factor family. In terms of processing, methylated by PrmC. Methylation increases the termination efficiency of RF1.

The protein resides in the cytoplasm. Its function is as follows. Peptide chain release factor 1 directs the termination of translation in response to the peptide chain termination codons UAG and UAA. The chain is Peptide chain release factor 1 from Proteus mirabilis (strain HI4320).